The following is a 293-amino-acid chain: Elongation factor Ts (293 aa).

Residues Thr-80 to Val-83 form an involved in Mg(2+) ion dislocation from EF-Tu region.

Belongs to the EF-Ts family.

The protein localises to the cytoplasm. Its function is as follows. Associates with the EF-Tu.GDP complex and induces the exchange of GDP to GTP. It remains bound to the aminoacyl-tRNA.EF-Tu.GTP complex up to the GTP hydrolysis stage on the ribosome. This is Elongation factor Ts from Paraburkholderia phymatum (strain DSM 17167 / CIP 108236 / LMG 21445 / STM815) (Burkholderia phymatum).